Consider the following 132-residue polypeptide: Small ribosomal subunit protein uS11 (132 aa).

It belongs to the universal ribosomal protein uS11 family. Part of the 30S ribosomal subunit. Interacts with proteins S7 and S18. Binds to IF-3.

In terms of biological role, located on the platform of the 30S subunit, it bridges several disparate RNA helices of the 16S rRNA. Forms part of the Shine-Dalgarno cleft in the 70S ribosome. The polypeptide is Small ribosomal subunit protein uS11 (Alcanivorax borkumensis (strain ATCC 700651 / DSM 11573 / NCIMB 13689 / SK2)).